A 1550-amino-acid polypeptide reads, in one-letter code: DNA excision repair protein ERCC-6-like 2 (1550 aa).

The disordered stretch occupies residues 1–23 (MDPSAPQPRAETSGKDIWHPGER). The segment covering 12 to 22 (TSGKDIWHPGE) has biased composition (basic and acidic residues). The 187-residue stretch at 135 to 321 (YGHYIHGGGC…WCVMDWAVPG (187 aa)) folds into the Helicase ATP-binding domain. 148 to 155 (DDMGLGKT) is an ATP binding site. A DEAH box motif is present at residues 272–275 (DEAH). A Helicase C-terminal domain is found at 512 to 662 (VLQQLLNHCR…CVVVGSENAK (151 aa)). An Atypical PIP-box motif is present at residues 785–796 (PGQLTLLQCGFS). Disordered stretches follow at residues 808 to 848 (DSDG…TSKH), 914 to 1002 (FPDN…SSLR), and 1354 to 1410 (AETK…TRTG). Composition is skewed to basic and acidic residues over residues 830-840 (EAKDAGCEKNQ) and 933-953 (TEHT…DKRN). 2 positions are modified to phosphoserine: serine 980 and serine 983. Basic residues predominate over residues 992–1002 (SRVRKRASSLR). The span at 1359-1388 (SPVSSTQEIDSGKNSQASEDTVTSRSLNSE) shows a compositional bias: polar residues. Phosphoserine is present on residues serine 1373 and serine 1376. Residues 1389–1405 (SETRERRLENTMKDQQD) show a composition bias toward basic and acidic residues.

The protein belongs to the SNF2/RAD54 helicase family. As to quaternary structure, interacts with NEK6. Interacts (via an atypical PIP-box) with PCNA; this interaction facilitates cenrtomeric localization of ERCC6L2. Interacts with CYREN; this interaction is DNA independent. Interacts with XRCC6 and XRCC5. Phosphorylated by NEK6. As to expression, expressed in bone marrow (at protein level).

It is found in the nucleus. Its subcellular location is the cytoplasm. The protein resides in the cytoskeleton. The protein localises to the microtubule organizing center. It localises to the centrosome. It is found in the mitochondrion. Its subcellular location is the chromosome. The protein resides in the centromere. Promotes double-strand break (DSB) end-joining and facilitates programmed recombination by controlling how DNA ends are joined in a spatially oriented manner during repair. Also plays a role in DNA repair by restricting DNA end resection in double strand break (DSB) repair. Facilitates replication of complex DNA regions and regulates the maintenance of chromatin structure. This chain is DNA excision repair protein ERCC-6-like 2, found in Homo sapiens (Human).